A 340-amino-acid chain; its full sequence is Cathepsin B (340 aa).

An N-terminal signal peptide occupies residues 1-17; it reads MSWSRSILCLLGAFANA. Residues 18 to 79 constitute a propeptide, activation peptide; it reads RSIPYYPPLS…ERVDFAEDMD (62 aa). Asparagine 38 is a glycosylation site (N-linked (GlcNAc...) asparagine). Intrachain disulfides connect cysteine 93-cysteine 122, cysteine 105-cysteine 150, cysteine 141-cysteine 208, cysteine 142-cysteine 146, cysteine 179-cysteine 212, and cysteine 187-cysteine 198. The active site involves cysteine 108. An N-linked (GlcNAc...) asparagine glycan is attached at asparagine 192. Residues histidine 279 and asparagine 299 contribute to the active site.

The protein belongs to the peptidase C1 family. As to quaternary structure, dimer of a heavy chain and a light chain cross-linked by a disulfide bond.

The protein resides in the lysosome. It catalyses the reaction Hydrolysis of proteins with broad specificity for peptide bonds. Preferentially cleaves -Arg-Arg-|-Xaa bonds in small molecule substrates (thus differing from cathepsin L). In addition to being an endopeptidase, shows peptidyl-dipeptidase activity, liberating C-terminal dipeptides.. Functionally, thiol protease which is believed to participate in intracellular degradation and turnover of proteins. Has also been implicated in tumor invasion and metastasis. The chain is Cathepsin B (CTSB) from Gallus gallus (Chicken).